The chain runs to 298 residues: Protein RKD2 (298 aa).

2 stretches are compositionally biased toward basic and acidic residues: residues Met-1–Lys-10 and Glu-81–Thr-102. 2 disordered regions span residues Met-1 to Asp-22 and Ser-73 to His-112. An RWP-RK domain is found at Ser-121–Lys-203. The stretch at Asn-188–Pro-222 forms a coiled coil. A disordered region spans residues Asn-241–Ser-279. Residues Ser-252 to Asp-269 are compositionally biased toward low complexity. Residues Glu-270–Ser-279 show a composition bias toward acidic residues.

It is found in the nucleus. Functionally, putative transcription factor. This is Protein RKD2 (RKD2) from Arabidopsis thaliana (Mouse-ear cress).